Consider the following 315-residue polypeptide: Homoserine kinase (315 aa).

An ATP-binding site is contributed by 97-107; it reads PPARGLGSSAT.

It belongs to the GHMP kinase family. Homoserine kinase subfamily.

The protein localises to the cytoplasm. It carries out the reaction L-homoserine + ATP = O-phospho-L-homoserine + ADP + H(+). The protein operates within amino-acid biosynthesis; L-threonine biosynthesis; L-threonine from L-aspartate: step 4/5. Its function is as follows. Catalyzes the ATP-dependent phosphorylation of L-homoserine to L-homoserine phosphate. The polypeptide is Homoserine kinase (Synechococcus sp. (strain CC9605)).